The chain runs to 252 residues: Chitooligosaccharide deacetylase (252 aa).

Residues histidine 61 and histidine 125 each contribute to the Mg(2+) site.

This sequence belongs to the YdjC deacetylase family. ChbG subfamily. Homodimer. The cofactor is Mg(2+).

The protein resides in the cytoplasm. It carries out the reaction N,N'-diacetylchitobiose + H2O = N-acetyl-beta-D-glucosaminyl-(1-&gt;4)-D-glucosamine + acetate. The catalysed reaction is diacetylchitobiose-6'-phosphate + H2O = N'-monoacetylchitobiose-6'-phosphate + acetate. It participates in glycan degradation; chitin degradation. In terms of biological role, involved in the degradation of chitin. ChbG is essential for growth on the acetylated chitooligosaccharides chitobiose and chitotriose but is dispensable for growth on cellobiose and chitosan dimer, the deacetylated form of chitobiose. Deacetylation of chitobiose-6-P and chitotriose-6-P is necessary for both the activation of the chb promoter by the regulatory protein ChbR and the hydrolysis of phosphorylated beta-glucosides by the phospho-beta-glucosidase ChbF. Catalyzes the removal of only one acetyl group from chitobiose-6-P to yield monoacetylchitobiose-6-P, the inducer of ChbR and the substrate of ChbF. This is Chitooligosaccharide deacetylase from Salmonella typhi.